Consider the following 353-residue polypeptide: Guanine nucleotide-binding protein alpha-3 subunit (353 aa).

Gly2 is lipidated: N-myristoyl glycine. The S-palmitoyl cysteine moiety is linked to residue Cys4. A G-alpha domain is found at 32–353 (KVVKLLLLGA…IQANLQGCGL (322 aa)). The interval 35 to 48 (KLLLLGAGECGKST) is G1 motif. GTP is bound by residues 40–47 (GAGECGKS), 176–182 (LLSRIKT), 201–205 (DVGGQ), 270–273 (NKKD), and Ala326. Positions 47 and 182 each coordinate Mg(2+). Positions 174 to 182 (DILLSRIKT) are G2 motif. Residues 197 to 206 (FRVFDVGGQR) are G3 motif. Residues 266–273 (ILFLNKKD) are G4 motif. The G5 motif stretch occupies residues 324–329 (TCATDT).

The protein belongs to the G-alpha family. G(q) subfamily. In terms of assembly, g proteins are composed of 3 units; alpha, beta and gamma. The alpha chain contains the guanine nucleotide binding site.

In terms of biological role, guanine nucleotide-binding proteins (G proteins) are involved as modulators or transducers in various transmembrane signaling systems. Promotes transcription of 3',5'-cyclic phosphodiesterases pde-1 and pde-5, leading to reduced cGMP levels in sensory neurons. This causes suppression of insulin production and signaling which leads to increased daf-16 activity and contributes to increased adult lifespan and resistance to oxidative stress. In addition, by reducing cGMP levels, inhibits TGF-beta signaling pathways. Involved in behavioral response to P.aeruginosa by controlling the expression of daf-7, a member of the TGF-beta family, in ASJ sensory neurons. Plays a role in the avoidance response to the noxious chemical quinine in ASH sensory neurons. The protein is Guanine nucleotide-binding protein alpha-3 subunit of Caenorhabditis elegans.